The chain runs to 955 residues: UPF0182 protein PMT_0755 (955 aa).

The next 9 helical transmembrane spans lie at 25 to 45 (LLLS…WLWF), 58 to 78 (WLWQ…CQLW), 107 to 127 (LLGC…LAWL), 146 to 166 (IWAL…MLGN), 178 to 198 (CFCF…ALAI), 214 to 234 (FGLG…AQLI), 264 to 284 (CNFL…LLWL), 313 to 333 (SLAS…TWIQ), and 340 to 360 (LIAS…APFV).

This sequence belongs to the UPF0182 family.

It localises to the cell membrane. In Prochlorococcus marinus (strain MIT 9313), this protein is UPF0182 protein PMT_0755.